The sequence spans 315 residues: Polyprenyl transferase mpaA (315 aa).

Transmembrane regions (helical) follow at residues 40 to 60 (IEFI…LCGA), 84 to 103 (LASG…GQYF), 118 to 135 (IWSL…YPYL), 143 to 163 (VFVY…ITGW), 174 to 194 (GDII…CVYF), 224 to 244 (LFLA…ISTI), 248 to 268 (WLWV…IAQF), and 279 to 299 (IHWD…VEVG).

This sequence belongs to the UbiA prenyltransferase family. Requires Mg(2+) as cofactor.

The protein resides in the golgi apparatus membrane. The enzyme catalyses 5,7-dihydroxy-4-methylphthalide + (2E,6E)-farnesyl diphosphate = 4-farnesyl-3,5-dihydroxy-6-methylphthalide + diphosphate. It participates in secondary metabolite biosynthesis; terpenoid biosynthesis. Its function is as follows. Polyprenyl transferase; part of the gene cluster that mediates the biosynthesis of mycophenolic acid (MPA), the first isolated antibiotic natural product in the world obtained from a culture of Penicillium brevicompactum in 1893. MpaA is a Golgi apparatus-associated enzyme that catalyzes the prenylation of 5,7-dihydroxy-4,6-dimethylphthalide (DHMP) to yield farnesyl-DHMP (FDHMP). The first step of the pathway is the synthesis of 5-methylorsellinic acid (5MOA) by the cytosolic polyketide synthase mpaC. 5MOA is then converted to the phthalide compound 5,7-dihydroxy-4,6-dimethylphthalide (DHMP) by the endoplasmic reticulum-bound cytochrome P450 monooxygenase mpaDE. MpaDE first catalyzes hydroxylation of 5-MOA to 4,6-dihydroxy-2-(hydroxymethyl)-3-methylbenzoic acid (DHMB). MpaDE then acts as a lactone synthase that catalyzes the ring closure to convert DHMB into DHMP. The next step is the prenylation of DHMP by the Golgi apparatus-associated prenyltransferase mpaA to yield farnesyl-DHMP (FDHMP). The ER-bound oxygenase mpaB then mediates the oxidative cleavage the C19-C20 double bond in FDHMP to yield FDHMP-3C via a mycophenolic aldehyde intermediate. The O-methyltransferase mpaG catalyzes the methylation of FDHMP-3C to yield MFDHMP-3C. After the cytosolic methylation of FDHMP-3C, MFDHMP-3C enters into peroxisomes probably via free diffusion due to its low molecular weight. Upon a peroxisomal CoA ligation reaction, catalyzed by a beta-oxidation component enzyme acyl-CoA ligase ACL891, MFDHMP-3C-CoA would then be restricted to peroxisomes for the following beta-oxidation pathway steps. The peroxisomal beta-oxidation machinery than converts MFDHMP-3C-CoA into MPA_CoA, via a beta-oxidation chain-shortening process. Finally mpaH acts as a peroxisomal acyl-CoA hydrolase with high substrate specificity toward MPA-CoA to release the final product MPA. This chain is Polyprenyl transferase mpaA, found in Penicillium brevicompactum.